We begin with the raw amino-acid sequence, 656 residues long: Acetyl-coenzyme A synthetase (656 aa).

Residues 198-201 and Thr316 each bind CoA; that span reads RGGR. Residues 392-394, 416-421, Asp507, and Arg522 contribute to the ATP site; these read GEP and DTFWQT. Ser530 lines the CoA pocket. ATP is bound at residue Arg533. Val544, His546, and Val549 together coordinate Mg(2+). Arg591 serves as a coordination point for CoA. Residue Lys616 is modified to N6-acetyllysine.

Belongs to the ATP-dependent AMP-binding enzyme family. Mg(2+) serves as cofactor. In terms of processing, acetylated. Deacetylation by the SIR2-homolog deacetylase activates the enzyme.

The enzyme catalyses acetate + ATP + CoA = acetyl-CoA + AMP + diphosphate. Catalyzes the conversion of acetate into acetyl-CoA (AcCoA), an essential intermediate at the junction of anabolic and catabolic pathways. AcsA undergoes a two-step reaction. In the first half reaction, AcsA combines acetate with ATP to form acetyl-adenylate (AcAMP) intermediate. In the second half reaction, it can then transfer the acetyl group from AcAMP to the sulfhydryl group of CoA, forming the product AcCoA. The polypeptide is Acetyl-coenzyme A synthetase (Rhodobacter capsulatus (strain ATCC BAA-309 / NBRC 16581 / SB1003)).